A 193-amino-acid polypeptide reads, in one-letter code: Phosphoheptose isomerase (193 aa).

In terms of domain architecture, SIS spans 37 to 193; it reads LADSFKAGGK…QLIEKEMVKA (157 aa). Residue 52–54 coordinates substrate; the sequence is NGG. Zn(2+)-binding residues include histidine 61 and glutamate 65. Residues glutamate 65, 93-94, 119-121, serine 124, and glutamine 172 contribute to the substrate site; these read ND and STS. Residues glutamine 172 and histidine 180 each coordinate Zn(2+).

Belongs to the SIS family. GmhA subfamily. As to quaternary structure, homotetramer. It depends on Zn(2+) as a cofactor.

The protein resides in the cytoplasm. It carries out the reaction 2 D-sedoheptulose 7-phosphate = D-glycero-alpha-D-manno-heptose 7-phosphate + D-glycero-beta-D-manno-heptose 7-phosphate. Its pathway is carbohydrate biosynthesis; D-glycero-D-manno-heptose 7-phosphate biosynthesis; D-glycero-alpha-D-manno-heptose 7-phosphate and D-glycero-beta-D-manno-heptose 7-phosphate from sedoheptulose 7-phosphate: step 1/1. Catalyzes the isomerization of sedoheptulose 7-phosphate in D-glycero-D-manno-heptose 7-phosphate. This Yersinia pseudotuberculosis serotype O:1b (strain IP 31758) protein is Phosphoheptose isomerase.